The primary structure comprises 342 residues: SH3 domain-containing YSC84-like protein 1 (342 aa).

The disordered stretch occupies residues 218-266 (GQRINARKAAREQRKSSAKELPPKPLSRPQQSSAPVQLNSGSQSNRNEY). Residues 226–239 (AAREQRKSSAKELP) show a composition bias toward basic and acidic residues. Polar residues predominate over residues 245 to 263 (RPQQSSAPVQLNSGSQSNR). Positions 283–342 (NQPIEVTALYSFEGQQPGDLNFQAGDRITVISKTDSHFDWWEGKLRGQTGIFPANYVTMN) constitute an SH3 domain.

This sequence belongs to the SH3YL1 family. In terms of assembly, interacts with SH3D19.

This Homo sapiens (Human) protein is SH3 domain-containing YSC84-like protein 1 (SH3YL1).